The sequence spans 159 residues: Ribonuclease H (159 aa).

An RNase H type-1 domain is found at 1 to 145 (MTHIRAIYTD…CDLIARRLSR (145 aa)). Mg(2+) is bound by residues Asp10, Glu49, Asp74, and Asp137.

It belongs to the RNase H family. Monomer. The cofactor is Mg(2+).

It is found in the cytoplasm. The catalysed reaction is Endonucleolytic cleavage to 5'-phosphomonoester.. Its function is as follows. Endonuclease that specifically degrades the RNA of RNA-DNA hybrids. The polypeptide is Ribonuclease H (Thermosynechococcus vestitus (strain NIES-2133 / IAM M-273 / BP-1)).